A 128-amino-acid chain; its full sequence is Small ribosomal subunit protein bS6 (128 aa).

Belongs to the bacterial ribosomal protein bS6 family.

Its function is as follows. Binds together with bS18 to 16S ribosomal RNA. This Geotalea uraniireducens (strain Rf4) (Geobacter uraniireducens) protein is Small ribosomal subunit protein bS6.